The following is a 460-amino-acid chain: Tyrosine phenol-lyase (460 aa).

The residue at position 260 (Lys-260) is an N6-(pyridoxal phosphate)lysine.

Belongs to the beta-eliminating lyase family. In terms of assembly, homotetramer. Pyridoxal 5'-phosphate is required as a cofactor.

The enzyme catalyses L-tyrosine + H2O = phenol + pyruvate + NH4(+). This chain is Tyrosine phenol-lyase, found in Clostridium tetani (strain Massachusetts / E88).